The primary structure comprises 431 residues: Argininosuccinate lyase (431 aa).

This sequence belongs to the lyase 1 family. Argininosuccinate lyase subfamily.

It localises to the cytoplasm. The catalysed reaction is 2-(N(omega)-L-arginino)succinate = fumarate + L-arginine. Its pathway is amino-acid biosynthesis; L-arginine biosynthesis; L-arginine from L-ornithine and carbamoyl phosphate: step 3/3. In Stenotrophomonas maltophilia (strain K279a), this protein is Argininosuccinate lyase.